Reading from the N-terminus, the 155-residue chain is Large ribosomal subunit protein eL24 (155 aa).

Positions 92 to 155 (AKRNMKPEVR…KSAPRVGGKR (64 aa)) are disordered. Over residues 96–117 (MKPEVRKAQRDQAIKAAKEQKK) the composition is skewed to basic and acidic residues. Residues 124 to 133 (KASAPAPKAK) show a composition bias toward low complexity.

It belongs to the eukaryotic ribosomal protein eL24 family.

The sequence is that of Large ribosomal subunit protein eL24 (RpL24) from Spodoptera frugiperda (Fall armyworm).